A 211-amino-acid polypeptide reads, in one-letter code: 2,3-bisphosphoglycerate-dependent phosphoglycerate mutase (211 aa).

Substrate-binding positions include 9-16 (RHGQSDWN), 22-23 (TG), Arg-61, 88-91 (ERDY), Lys-99, 115-116 (RR), and 159-160 (GN). Residue His-10 is the Tele-phosphohistidine intermediate of the active site. Glu-88 serves as the catalytic Proton donor/acceptor.

It belongs to the phosphoglycerate mutase family. BPG-dependent PGAM subfamily. Homodimer.

It catalyses the reaction (2R)-2-phosphoglycerate = (2R)-3-phosphoglycerate. It participates in carbohydrate degradation; glycolysis; pyruvate from D-glyceraldehyde 3-phosphate: step 3/5. Its function is as follows. Catalyzes the interconversion of 2-phosphoglycerate and 3-phosphoglycerate. This is 2,3-bisphosphoglycerate-dependent phosphoglycerate mutase from Rhizobium meliloti (strain 1021) (Ensifer meliloti).